Reading from the N-terminus, the 231-residue chain is Trypsin (231 aa).

Positions 1–8 (FPTDDDDK) are cleaved as a propeptide — activation peptide. The Peptidase S1 domain occupies 9–229 (IVGGYTCAAN…YVNWIQQTIA (221 aa)). 6 cysteine pairs are disulfide-bonded: Cys15–Cys145, Cys33–Cys49, Cys117–Cys218, Cys124–Cys191, Cys156–Cys170, and Cys181–Cys205. Residue His48 is the Charge relay system of the active site. Ca(2+) is bound by residues Glu60, Asn62, Val65, and Glu70. The active-site Charge relay system is the Asp92. Catalysis depends on Ser185, which acts as the Charge relay system.

It belongs to the peptidase S1 family. Requires Ca(2+) as cofactor.

The protein resides in the secreted. It localises to the extracellular space. It carries out the reaction Preferential cleavage: Arg-|-Xaa, Lys-|-Xaa.. The chain is Trypsin from Sus scrofa (Pig).